The chain runs to 301 residues: Vomeronasal type-1 receptor 4 (301 aa).

The Extracellular portion of the chain corresponds to 1–15 (MASRYVAVGMMLSQT). The helical transmembrane segment at 16–36 (VVGVLGSFSLLLHYLSLHYIG) threads the bilayer. The Cytoplasmic segment spans residues 37–48 (CRLRSADLIVKH). A helical membrane pass occupies residues 49–69 (LIAASFLTLLCKGVPQTMAAF). Over 70 to 88 (RVRYFLNAIGCKLVFYLHR) the chain is Extracellular. Residues 89–107 (VGRGVSTGTTCLLSVFQVI) form a helical membrane-spanning segment. The Cytoplasmic segment spans residues 108-126 (TVSSRKSRWAKLKEKAPKH). Residues 127–147 (VGFSVLLCWILCMLVNIIFPI) traverse the membrane as a helical segment. The Extracellular segment spans residues 148–185 (YVTGKRNHTNITVNKDLGDCCGRGNNKIAQTLRAMLLS). Residues asparagine 154 and asparagine 157 are each glycosylated (N-linked (GlcNAc...) asparagine). A helical membrane pass occupies residues 186–206 (FPDVLCLGFMLWASSSMVCIL). The Cytoplasmic portion of the chain corresponds to 207 to 234 (HRHKQRVQHIHRSNLSPRASPENRATQS). The helical transmembrane segment at 235–255 (ILIPVSTFVSSYTLSCLLQVC) threads the bilayer. Residues 256-264 (MALLDNPNS) are Extracellular-facing. The helical transmembrane segment at 265–285 (LLVNTSALMSACFPTLSPFVL) threads the bilayer. Residues 286–301 (MSCDPSVYRLCFAWKR) lie on the Cytoplasmic side of the membrane.

This sequence belongs to the G-protein coupled receptor 1 family.

The protein resides in the cell membrane. Its function is as follows. Putative pheromone receptor. This is Vomeronasal type-1 receptor 4 (VN1R4) from Pongo pygmaeus (Bornean orangutan).